The following is a 127-amino-acid chain: Classical arabinogalactan protein 10 (127 aa).

The first 21 residues, 1-21 (MASKSVVVLLFLALIASSAIA), serve as a signal peptide directing secretion. Q22 carries the pyrrolidone carboxylic acid modification. Residues 22-107 (QAPGPAPTRS…TGSTPVDNNN (86 aa)) form a disordered region. P24, P26, P28, P32, and P36 each carry 4-hydroxyproline. P24, P26, P28, P32, and P36 each carry an O-linked (Ara...) hydroxyproline glycan. Pro residues-rich tracts occupy residues 25–39 (GPAP…PAQP), 48–58 (SITPTPTPTPS), and 66–86 (VSPP…PPTS). Positions 98–107 (TGSTPVDNNN) are enriched in polar residues. N107 is lipidated: GPI-anchor amidated asparagine. The propeptide at 108 to 127 (AATLAAGSLAGFVFVASLLL) is removed in mature form.

This sequence belongs to the classical AGP family. O-glycosylated on hydroxyprolines; noncontiguous hydroxylproline residues are glycosylated with arabinogalactan. In terms of tissue distribution, predominantly expressed in flowers and at a lower level in roots and siliques.

It localises to the cell membrane. In terms of biological role, proteoglycan that seems to be implicated in diverse developmental roles such as differentiation, cell-cell recognition, embryogenesis and programmed cell death. The chain is Classical arabinogalactan protein 10 (AGP10) from Arabidopsis thaliana (Mouse-ear cress).